The chain runs to 103 residues: MANQRIRIRLKAFDHRLIDQSTAEIVETAKRTGAQVRGPIPLPTRKERFTVLISPHVNKDARDQYEIRTHKRLIDIMDPTDKTVDALMRLDLAAGVDVQISLG.

It belongs to the universal ribosomal protein uS10 family. Part of the 30S ribosomal subunit.

Involved in the binding of tRNA to the ribosomes. This Idiomarina loihiensis (strain ATCC BAA-735 / DSM 15497 / L2-TR) protein is Small ribosomal subunit protein uS10.